Consider the following 491-residue polypeptide: Trypanothione reductase (491 aa).

35–51 contacts FAD; the sequence is DLQKHHGPPHYAALGGT. C52 and C57 form a disulfide bridge. Catalysis depends on H461, which acts as the Proton acceptor.

This sequence belongs to the class-I pyridine nucleotide-disulfide oxidoreductase family. As to quaternary structure, homodimer. It depends on FAD as a cofactor. The N-terminus is blocked.

The protein resides in the cytoplasm. It carries out the reaction trypanothione + NADP(+) = trypanothione disulfide + NADPH + H(+). In terms of biological role, trypanothione is the parasite analog of glutathione; this enzyme is the equivalent of glutathione reductase. This chain is Trypanothione reductase (TPR), found in Crithidia fasciculata.